Here is a 223-residue protein sequence, read N- to C-terminus: Translation initiation factor 6 (223 aa).

Belongs to the eIF-6 family.

Binds to the 50S ribosomal subunit and prevents its association with the 30S ribosomal subunit to form the 70S initiation complex. In Saccharolobus islandicus (strain M.16.27) (Sulfolobus islandicus), this protein is Translation initiation factor 6.